Consider the following 133-residue polypeptide: S-adenosylmethionine decarboxylase proenzyme (133 aa).

The Schiff-base intermediate with substrate; via pyruvic acid role is filled by Ser-64. Ser-64 bears the Pyruvic acid (Ser); by autocatalysis mark. The active-site Proton acceptor; for processing activity is the His-69. Cys-84 acts as the Proton donor; for catalytic activity in catalysis.

It belongs to the prokaryotic AdoMetDC family. Type 1 subfamily. Heterotetramer of two alpha and two beta chains arranged as a dimer of alpha/beta heterodimers. Pyruvate serves as cofactor. In terms of processing, is synthesized initially as an inactive proenzyme. Formation of the active enzyme involves a self-maturation process in which the active site pyruvoyl group is generated from an internal serine residue via an autocatalytic post-translational modification. Two non-identical subunits are generated from the proenzyme in this reaction, and the pyruvate is formed at the N-terminus of the alpha chain, which is derived from the carboxyl end of the proenzyme. The post-translation cleavage follows an unusual pathway, termed non-hydrolytic serinolysis, in which the side chain hydroxyl group of the serine supplies its oxygen atom to form the C-terminus of the beta chain, while the remainder of the serine residue undergoes an oxidative deamination to produce ammonia and the pyruvoyl group blocking the N-terminus of the alpha chain.

The enzyme catalyses S-adenosyl-L-methionine + H(+) = S-adenosyl 3-(methylsulfanyl)propylamine + CO2. The protein operates within amine and polyamine biosynthesis; S-adenosylmethioninamine biosynthesis; S-adenosylmethioninamine from S-adenosyl-L-methionine: step 1/1. Functionally, catalyzes the decarboxylation of S-adenosylmethionine to S-adenosylmethioninamine (dcAdoMet), the propylamine donor required for the synthesis of the polyamines spermine and spermidine from the diamine putrescine. This is S-adenosylmethionine decarboxylase proenzyme from Sulfurihydrogenibium sp. (strain YO3AOP1).